The following is a 192-amino-acid chain: Probable nicotinate-nucleotide adenylyltransferase (192 aa).

It belongs to the NadD family.

The enzyme catalyses nicotinate beta-D-ribonucleotide + ATP + H(+) = deamido-NAD(+) + diphosphate. It functions in the pathway cofactor biosynthesis; NAD(+) biosynthesis; deamido-NAD(+) from nicotinate D-ribonucleotide: step 1/1. Catalyzes the reversible adenylation of nicotinate mononucleotide (NaMN) to nicotinic acid adenine dinucleotide (NaAD). This is Probable nicotinate-nucleotide adenylyltransferase from Staphylococcus haemolyticus (strain JCSC1435).